We begin with the raw amino-acid sequence, 345 residues long: Selenide, water dikinase (345 aa).

The active site involves Cys-15. ATP contacts are provided by residues Lys-18 and 46 to 48 (SKD). Asp-49 contacts Mg(2+). Residues Asp-66, Asp-89, and 137–139 (GHS) contribute to the ATP site. Asp-89 is a binding site for Mg(2+). Mg(2+) is bound at residue Asp-225.

Belongs to the selenophosphate synthase 1 family. Class I subfamily. In terms of assembly, homodimer. The cofactor is Mg(2+).

It catalyses the reaction hydrogenselenide + ATP + H2O = selenophosphate + AMP + phosphate + 2 H(+). Its function is as follows. Synthesizes selenophosphate from selenide and ATP. This Aeromonas salmonicida (strain A449) protein is Selenide, water dikinase.